A 138-amino-acid polypeptide reads, in one-letter code: Ribosome-binding factor A (138 aa).

The segment at 119–138 is disordered; the sequence is RSPEVQRDLGPSNEKDDEQN.

The protein belongs to the RbfA family. In terms of assembly, monomer. Binds 30S ribosomal subunits, but not 50S ribosomal subunits or 70S ribosomes.

It is found in the cytoplasm. In terms of biological role, one of several proteins that assist in the late maturation steps of the functional core of the 30S ribosomal subunit. Associates with free 30S ribosomal subunits (but not with 30S subunits that are part of 70S ribosomes or polysomes). Required for efficient processing of 16S rRNA. May interact with the 5'-terminal helix region of 16S rRNA. This is Ribosome-binding factor A from Agrobacterium fabrum (strain C58 / ATCC 33970) (Agrobacterium tumefaciens (strain C58)).